Here is a 793-residue protein sequence, read N- to C-terminus: Probable phosphoketolase (793 aa).

It belongs to the XFP family. Thiamine diphosphate serves as cofactor.

The sequence is that of Probable phosphoketolase from Rhodopirellula baltica (strain DSM 10527 / NCIMB 13988 / SH1).